The primary structure comprises 336 residues: Aspartate carbamoyltransferase catalytic subunit (336 aa).

The carbamoyl phosphate site is built by Arg-71 and Thr-72. Lys-99 is an L-aspartate binding site. Carbamoyl phosphate-binding residues include Arg-121, His-151, and Gln-154. Positions 184 and 239 each coordinate L-aspartate. The carbamoyl phosphate site is built by Gly-280 and Pro-281.

It belongs to the aspartate/ornithine carbamoyltransferase superfamily. ATCase family. As to quaternary structure, heterododecamer (2C3:3R2) of six catalytic PyrB chains organized as two trimers (C3), and six regulatory PyrI chains organized as three dimers (R2).

It catalyses the reaction carbamoyl phosphate + L-aspartate = N-carbamoyl-L-aspartate + phosphate + H(+). The protein operates within pyrimidine metabolism; UMP biosynthesis via de novo pathway; (S)-dihydroorotate from bicarbonate: step 2/3. Its function is as follows. Catalyzes the condensation of carbamoyl phosphate and aspartate to form carbamoyl aspartate and inorganic phosphate, the committed step in the de novo pyrimidine nucleotide biosynthesis pathway. This Azotobacter vinelandii (strain DJ / ATCC BAA-1303) protein is Aspartate carbamoyltransferase catalytic subunit.